The following is a 73-amino-acid chain: Waprin-Phi2 (73 aa).

The signal sequence occupies residues 1–21 (MKATLLLLLLFAVILPGTISA). In terms of domain architecture, WAP spans 22–72 (EQEKPGSCPNVDMPIPPLGLCKTTCSKDSDCSETKKCCKNGCGFMTCTTAR). 4 disulfides stabilise this stretch: C29–C59, C42–C63, C46–C58, and C52–C68.

This sequence belongs to the venom waprin family. In terms of tissue distribution, expressed by the venom gland.

The protein localises to the secreted. Its function is as follows. Damages membranes of susceptible bacteria. Has no hemolytic activity. Not toxic to mice. Does not inhibit the proteinases elastase and cathepsin G. The sequence is that of Waprin-Phi2 from Philodryas olfersii (Green snake).